Reading from the N-terminus, the 1531-residue chain is Nuclear factor of activated T-cells 5 (1531 aa).

Disordered regions lie at residues 34-89 (ELQL…TSSS) and 114-141 (VSNRGVSEKQLTSNTVQQHPSTPKRHTV). The span at 41-51 (RETSVASMSQT) shows a compositional bias: polar residues. Low complexity predominate over residues 63–89 (VVAADASSAPSSSSMGGACSSFTTSSS). Position 120 is a phosphoserine (Ser120). Residue Lys122 is modified to N6-acetyllysine. Residues 122–134 (KQLTSNTVQQHPS) are compositionally biased toward polar residues. Ser134 is subject to Phosphoserine. Thr135 is modified (phosphothreonine; by CDK5). Ser155 is modified (phosphoserine). 2 disordered regions span residues 175 to 220 (WMED…CEES) and 241 to 265 (TTDNKGNSKAGNGTLENQKGTGVKK). Low complexity predominate over residues 179-192 (SPSNFSNMSTSSYN). The segment covering 200 to 212 (KSRKRNPKQRPGV) has biased composition (basic residues). Residues 241–260 (TTDNKGNSKAGNGTLENQKG) show a composition bias toward polar residues. An RHD domain is found at 264–443 (KKSPMLCGQY…SPILCTQPAG (180 aa)). The DNA-binding element occupies 293-300 (RARYLTEG). A Glycyl lysine isopeptide (Lys-Gly) (interchain with G-Cter in SUMO1); alternate cross-link involves residue Lys556. A Glycyl lysine isopeptide (Lys-Gly) (interchain with G-Cter in SUMO2); alternate cross-link involves residue Lys556. Residue Ser561 is modified to Phosphoserine. Glycyl lysine isopeptide (Lys-Gly) (interchain with G-Cter in SUMO2) cross-links involve residues Lys573 and Lys603. Disordered stretches follow at residues 640–666 (NIAGNGSFSSPSSSHLPSENEKQQQIQ), 841–891 (VSPG…QVME), 958–996 (PPAVSGNETSTTTTQQVATPGTTMFQTSSSGDGEETGTQ), 1211–1304 (PQVA…QEQQ), 1316–1371 (APMN…QEQQ), and 1473–1502 (ISQPGQPQNEGQPPVTTLLSQQMPENSPLA). The segment covering 646–656 (SFSSPSSSHLP) has biased composition (low complexity). Composition is skewed to polar residues over residues 841-852 (VSPGMFSSTEPT) and 869-878 (HPQSENTLSN). Low complexity-rich tracts occupy residues 879–888 (QQQQQQQQQQ) and 960–980 (AVSGNETSTTTTQQVATPGTT). Polar residues-rich tracts occupy residues 981 to 996 (MFQTSSSGDGEETGTQ) and 1224 to 1247 (PQSQQGTMFQSQHSIVAMQSNSPS). A compositionally biased stretch (low complexity) spans 1248–1266 (QEQQQQQQQQQQQQQQQQQ). Polar residues-rich tracts occupy residues 1267 to 1278 (SILFSNQNTMAT) and 1291 to 1304 (FNPNQNPMANQEQQ). The segment covering 1320–1330 (QEQQPMQFQSQ) has biased composition (low complexity). Over residues 1331–1371 (STVSSLQNPGPTQSESSQTPLFHSSPQIQLVQGSPSSQEQQ) the composition is skewed to polar residues. Residues 1475 to 1486 (QPGQPQNEGQPP) are compositionally biased toward low complexity. The span at 1487 to 1502 (VTTLLSQQMPENSPLA) shows a compositional bias: polar residues.

Homodimer when bound to DNA, completely encircles its DNA target. Interacts with CIDEC; this interaction is direct and retains NFAT5 in the cytoplasm. Does not bind with Fos and Jun transcription factors. Interacts with DDX5 and DDX17; this interaction leads to DDX5/DDX17 recruitment to LNC2 and S100A4 promoters and NFAT5-mediated DDX5/DDX17-enhanced transactivation. Phosphorylated. Phosphorylated at Thr-135 by CDK5 in response to osmotic stress; this phosphorylation mediates its rapid nuclear localization. Post-translationally, poly-ADP-ribosylated by PARP1 in response to DNA damage, promoting recruitment to sites of R-loop-associated DNA damage. Widely expressed, with highest levels in skeletal muscle, brain, heart and peripheral blood leukocytes.

Its subcellular location is the nucleus. It is found in the cytoplasm. The protein localises to the chromosome. Functionally, transcription factor involved, among others, in the transcriptional regulation of osmoprotective and inflammatory genes. Binds the DNA consensus sequence 5'-[ACT][AG]TGGAAA[CAT]A[TA][ATC][CA][ATG][GT][GAC][CG][CT]-3'. Mediates the transcriptional response to hypertonicity. Positively regulates the transcription of LCN2 and S100A4 genes; optimal transactivation of these genes requires the presence of DDX5/DDX17. Also involved in the DNA damage response by preventing formation of R-loops; R-loops are composed of a DNA:RNA hybrid and the associated non-template single-stranded DNA. The protein is Nuclear factor of activated T-cells 5 of Homo sapiens (Human).